Here is a 370-residue protein sequence, read N- to C-terminus: Anhydro-N-acetylmuramic acid kinase (370 aa).

12–19 (GTSLDGVD) provides a ligand contact to ATP.

This sequence belongs to the anhydro-N-acetylmuramic acid kinase family.

It catalyses the reaction 1,6-anhydro-N-acetyl-beta-muramate + ATP + H2O = N-acetyl-D-muramate 6-phosphate + ADP + H(+). Its pathway is amino-sugar metabolism; 1,6-anhydro-N-acetylmuramate degradation. It functions in the pathway cell wall biogenesis; peptidoglycan recycling. Its function is as follows. Catalyzes the specific phosphorylation of 1,6-anhydro-N-acetylmuramic acid (anhMurNAc) with the simultaneous cleavage of the 1,6-anhydro ring, generating MurNAc-6-P. Is required for the utilization of anhMurNAc either imported from the medium or derived from its own cell wall murein, and thus plays a role in cell wall recycling. The protein is Anhydro-N-acetylmuramic acid kinase of Proteus mirabilis (strain HI4320).